A 359-amino-acid polypeptide reads, in one-letter code: MKTRSSDAEGDSRGKMIAPVGEGNGGRKRKLVQSNEQKNDIQREEDGRAKRRIVQSSDQKNGKILRGIRGCVSPRCSAQTYQSRFSWYEQDIWTYISRFLDGKSLVKLGATNKWFYKIAMEDTVWRFACLRDLQVPVPFPVSSTWIKIYASAFDGSHSYLFRQKEKHIDWMRIGAFVLDSRTSLLTESLSGRLKFPREGTIERMLQSSGSCLINDIKSGIWIADLQLVRCPVCDLSTCDGTMQTLDARHIELFLSEGYKDGSWDYNLIGSHKLQKNASAACGAIFDLKHLKESSYSGILNLKSWTGESNDSQPKAVIAPHAVAVHTRLQENEGILVKYHTMKAGTDGDIVSIRISQQLL.

Composition is skewed to basic and acidic residues over residues 1–14 (MKTRSSDAEGDSRG) and 37–48 (QKNDIQREEDGR). Residues 1–60 (MKTRSSDAEGDSRGKMIAPVGEGNGGRKRKLVQSNEQKNDIQREEDGRAKRRIVQSSDQK) are disordered. In terms of domain architecture, F-box; degenerate spans 82-128 (QSRFSWYEQDIWTYISRFLDGKSLVKLGATNKWFYKIAMEDTVWRFA).

Interacts with SKP1A. As to expression, expressed in flower buds, developing anthers, pollen grains, siliques, rosette leaves and roots. Detected at lower levels in open flowers, stems and cauline leaves. Expressed in young seedling in the hydathodes, shoot apical meristem, root tips and lateral root primordia.

It localises to the nucleus. In terms of biological role, regulates tapetum degeneration and pollen maturation during anther development. The protein is Probable F-box protein At3g61730 (RMF) of Arabidopsis thaliana (Mouse-ear cress).